Reading from the N-terminus, the 225-residue chain is Putative O-phosphotransferase MT2714 (225 aa).

30-37 (GGSSAGKT) serves as a coordination point for ATP.

To S.violaceus chloramphenicol 3-O phosphotransferase.

The chain is Putative O-phosphotransferase MT2714 from Mycobacterium tuberculosis (strain CDC 1551 / Oshkosh).